Reading from the N-terminus, the 134-residue chain is Holo-[acyl-carrier-protein] synthase (134 aa).

Positions 8 and 57 each coordinate Mg(2+).

The protein belongs to the P-Pant transferase superfamily. AcpS family. Mg(2+) serves as cofactor.

The protein resides in the cytoplasm. It carries out the reaction apo-[ACP] + CoA = holo-[ACP] + adenosine 3',5'-bisphosphate + H(+). Transfers the 4'-phosphopantetheine moiety from coenzyme A to a Ser of acyl-carrier-protein. The sequence is that of Holo-[acyl-carrier-protein] synthase from Rhizobium etli (strain ATCC 51251 / DSM 11541 / JCM 21823 / NBRC 15573 / CFN 42).